Here is a 432-residue protein sequence, read N- to C-terminus: Protein arginine N-methyltransferase 2 (432 aa).

Low complexity predominate over residues 1–11; it reads MESSSECSSIS. Residues 1–22 are disordered; the sequence is MESSSECSSISDFQDSTEGDDA. Residues 29–88 enclose the SH3 domain; that stretch reads LCMREYVVICDYVATDNTQLSLCSGDKVLLLNAVSQDWWWVNHNGTCGYVPASHLHDALN. The 305-residue stretch at 101–405 folds into the SAM-dependent MTase PRMT-type domain; that stretch reads DEEYYGSYKT…FERNSVWRRH (305 aa). S-adenosyl-L-methionine contacts are provided by His-114, Arg-123, Gly-147, Glu-170, and Glu-199. Active-site residues include Glu-213 and Glu-222.

This sequence belongs to the class I-like SAM-binding methyltransferase superfamily. Protein arginine N-methyltransferase family. Interacts with ctnnb1.

It is found in the cytoplasm. Its subcellular location is the nucleus. The enzyme catalyses L-arginyl-[protein] + 2 S-adenosyl-L-methionine = N(omega),N(omega)-dimethyl-L-arginyl-[protein] + 2 S-adenosyl-L-homocysteine + 2 H(+). In terms of biological role, arginine methyltransferase that methylates the guanidino nitrogens of arginyl residues in proteins such as histones. Involved in growth regulation. Involved in embryonic dorsal development. This Xenopus laevis (African clawed frog) protein is Protein arginine N-methyltransferase 2 (prmt2).